Here is a 233-residue protein sequence, read N- to C-terminus: Phosducin-like protein C2A9.09 (233 aa).

Residues 58-212 (EDEEDDEFLQ…DIAALKDPQN (155 aa)) form the Phosducin domain. The tract at residues 86–233 (FGSVYPISKP…VNDDLDDDFD (148 aa)) is thioredoxin fold. A disordered region spans residues 207–233 (LKDPQNAEDELGKRDSSVNDDLDDDFD). 2 positions are modified to phosphoserine: serine 222 and serine 223. The span at 224 to 233 (VNDDLDDDFD) shows a compositional bias: acidic residues.

The protein belongs to the phosducin family.

In Schizosaccharomyces pombe (strain 972 / ATCC 24843) (Fission yeast), this protein is Phosducin-like protein C2A9.09.